The following is a 427-amino-acid chain: Thymidine phosphorylase (427 aa).

Belongs to the thymidine/pyrimidine-nucleoside phosphorylase family. Homodimer.

The enzyme catalyses thymidine + phosphate = 2-deoxy-alpha-D-ribose 1-phosphate + thymine. The enzymes which catalyze the reversible phosphorolysis of pyrimidine nucleosides are involved in the degradation of these compounds and in their utilization as carbon and energy sources, or in the rescue of pyrimidine bases for nucleotide synthesis. This chain is Thymidine phosphorylase (deoA), found in Mycobacterium tuberculosis (strain CDC 1551 / Oshkosh).